The primary structure comprises 61 residues: Large ribosomal subunit protein bL32 (61 aa).

The segment at M1–K44 is disordered. Residues R7–R16 are compositionally biased toward basic residues. The segment covering N25–G34 has biased composition (polar residues).

It belongs to the bacterial ribosomal protein bL32 family.

The sequence is that of Large ribosomal subunit protein bL32 from Acinetobacter baylyi (strain ATCC 33305 / BD413 / ADP1).